A 261-amino-acid chain; its full sequence is Spermatogenesis-associated protein 46 (261 aa).

Positions 140–159 (SSSSSPENTCPREATKKSRH) are disordered.

In terms of tissue distribution, testis-specific.

It is found in the nucleus membrane. Its function is as follows. Plays a role in spermiogenesis and fertilization. This is Spermatogenesis-associated protein 46 from Homo sapiens (Human).